A 239-amino-acid chain; its full sequence is MVIKAQSPAGFAEEYIIESIWNNRFPPGTILPAERELSELIGVTRTTLREVLQRLARDGWLTIQHGKPTKVNNFWETSGLNILETLARLDHESVPQLIDNLLSVRTNISTIFIRTALRQHPDKAQEVLATAHEVADHADAFADLDYNIFRGLAFASGNPIYGLILNGMKGLYTRIGRHYFANSEARSLALGFYHKLSSLCEQGAHDQVYETVRRYGHDSGEIWHRMQKNLPGDLAIQGR.

The 69-residue stretch at 6 to 74 (QSPAGFAEEY…HGKPTKVNNF (69 aa)) folds into the HTH gntR-type domain. Positions 34 to 53 (ERELSELIGVTRTTLREVLQ) form a DNA-binding region, H-T-H motif.

Homodimer.

The protein resides in the cytoplasm. Its function is as follows. Multifunctional regulator of fatty acid metabolism. This is Fatty acid metabolism regulator protein from Salmonella paratyphi C (strain RKS4594).